The sequence spans 141 residues: HTH-type transcriptional repressor NsrR (141 aa).

Positions 2–129 (QLTSFTDYGL…DNYTLADLVE (128 aa)) constitute an HTH rrf2-type domain. Residues 28 to 51 (ISEVTDVYGVSRNHMVKIINQLSR) constitute a DNA-binding region (H-T-H motif). [2Fe-2S] cluster contacts are provided by C91, C96, and C102.

It depends on [2Fe-2S] cluster as a cofactor.

Nitric oxide-sensitive repressor of genes involved in protecting the cell against nitrosative stress. May require iron for activity. This is HTH-type transcriptional repressor NsrR from Escherichia fergusonii (strain ATCC 35469 / DSM 13698 / CCUG 18766 / IAM 14443 / JCM 21226 / LMG 7866 / NBRC 102419 / NCTC 12128 / CDC 0568-73).